The sequence spans 335 residues: Phosphate acyltransferase (335 aa).

This sequence belongs to the PlsX family. Homodimer. Probably interacts with PlsY.

The protein resides in the cytoplasm. It catalyses the reaction a fatty acyl-[ACP] + phosphate = an acyl phosphate + holo-[ACP]. It functions in the pathway lipid metabolism; phospholipid metabolism. Catalyzes the reversible formation of acyl-phosphate (acyl-PO(4)) from acyl-[acyl-carrier-protein] (acyl-ACP). This enzyme utilizes acyl-ACP as fatty acyl donor, but not acyl-CoA. The protein is Phosphate acyltransferase of Brevibacillus brevis (strain 47 / JCM 6285 / NBRC 100599).